The sequence spans 1274 residues: DENN domain-containing protein 5B (1274 aa).

Serine 2 carries the post-translational modification N-acetylserine. A uDENN domain is found at 39–244; that stretch reads DELAGENFDQ…EVPLPPPGRS (206 aa). Serine 49 and serine 178 each carry phosphoserine. The cDENN domain occupies 263–399; that stretch reads ELPLSDYPLR…VDFIQELSEV (137 aa). Positions 401-581 constitute a dDENN domain; sequence VQFGIPPEGS…DNKIMSQWEE (181 aa). The RUN 1 domain maps to 772-932; the sequence is LEENTLIASL…DYFCFTSVFT (161 aa). Position 822 is a phosphoserine (serine 822). A helical transmembrane segment spans residues 916 to 936; the sequence is LLSLNAVDYFCFTSVFTTIMI. In terms of domain architecture, PLAT spans 936 to 1044; sequence IPYRSVIIPI…DDGSLERILI (109 aa). Threonine 1062 is modified (phosphothreonine). 3 positions are modified to phosphoserine: serine 1068, serine 1076, and serine 1079. An RUN 2 domain is found at 1118 to 1267; the sequence is TVLLCGENGL…QDFTIVLEGS (150 aa).

It belongs to the RAB6IP1 family.

It localises to the membrane. Guanine nucleotide exchange factor (GEF) which may activate RAB39A and/or RAB39B. Promotes the exchange of GDP to GTP, converting inactive GDP-bound Rab proteins into their active GTP-bound form. The chain is DENN domain-containing protein 5B (DENND5B) from Homo sapiens (Human).